Here is a 786-residue protein sequence, read N- to C-terminus: Myosin light chain kinase 3 (786 aa).

Residue Ser155 is modified to Phosphoserine. Disordered stretches follow at residues 233–258, 279–315, and 333–443; these read EALDPGQEPPPTEAESRLPALASEDT, RMSQSAGEGTSSSKPDCSEPGPQPLGPLTTDSDIHSD, and ELFE…GRRV. The segment covering 279-293 has biased composition (polar residues); sequence RMSQSAGEGTSSSKP. Phosphoserine is present on residues Ser341 and Ser422. In terms of domain architecture, Protein kinase spans 482 to 737; sequence VSQHEVLGGG…ATQCLKHEWL (256 aa). ATP-binding positions include 488-496 and Lys511; that span reads LGGGRFGQV. Residue Asp603 is the Proton acceptor of the active site.

This sequence belongs to the protein kinase superfamily. CAMK Ser/Thr protein kinase family. The cofactor is Mg(2+). Post-translationally, phosphorylated on serine residues. As to expression, expressed in cardiomyocytes (at protein level). Up-regulated in heart after experimental myocardial infarction at the mRNA level.

The protein resides in the cytoplasm. The catalysed reaction is L-seryl-[myosin light chain] + ATP = O-phospho-L-seryl-[myosin light chain] + ADP + H(+). It carries out the reaction L-threonyl-[myosin light chain] + ATP = O-phospho-L-threonyl-[myosin light chain] + ADP + H(+). Functionally, calmodulin-dependent kinase that phosphorylates MYL2 in vitro. Promotes sarcomere formation in cardiomyocytes. Increases cardiomyocyte contractility. This is Myosin light chain kinase 3 (Mylk3) from Rattus norvegicus (Rat).